A 378-amino-acid chain; its full sequence is 1-acyl-sn-glycerol-3-phosphate acyltransferase delta (378 aa).

A helical membrane pass occupies residues 11–31 (FLCHLVFCYVFIASGLIINTI). Positions 96–101 (HKFEID) match the HXXXXD motif motif. 3 helical membrane-spanning segments follow: residues 125–145 (ELAY…VFCS), 307–327 (TLVN…QFLV), and 338–358 (LASF…MIGV).

Belongs to the 1-acyl-sn-glycerol-3-phosphate acyltransferase family. Widely expressed with highest levels in skeletal muscle, followed by heart, liver, prostate and thymus.

It localises to the endoplasmic reticulum membrane. It carries out the reaction a 1-acyl-sn-glycero-3-phosphate + an acyl-CoA = a 1,2-diacyl-sn-glycero-3-phosphate + CoA. It catalyses the reaction (4Z,7Z,10Z,13Z,16Z,19Z)-docosahexaenoyl-CoA + 1-hexadecanoyl-sn-glycero-3-phosphate = 1-hexadecanoyl-2-(4Z,7Z,10Z,13Z,16Z,19Z-docosahexaenoyl)-sn-glycero-3-phosphate + CoA. The catalysed reaction is 1-octadecanoyl-sn-glycero-3-phosphate + (9Z,12Z)-octadecadienoyl-CoA = 1-octadecanoyl-2-(9Z,12Z-octadecadienoyl)-sn-glycero-3-phosphate + CoA. The enzyme catalyses 1-octadecanoyl-sn-glycero-3-phosphate + (4Z,7Z,10Z,13Z,16Z,19Z)-docosahexaenoyl-CoA = 1-octadecanoyl-2-(4Z,7Z,10Z,13Z,16Z,19Z-docosahexaenoyl)-sn-glycero-3-phosphate + CoA. It carries out the reaction (4Z,7Z,10Z,13Z,16Z,19Z)-docosahexaenoyl-CoA + 1-(9Z-octadecenoyl)-sn-glycero-3-phosphate = 1-(9Z-octadecenoyl)-2-(4Z,7Z,10Z,13Z,16Z,19Z-docosahexaenoyl)-sn-glycero-3-phosphate + CoA. The protein operates within phospholipid metabolism; CDP-diacylglycerol biosynthesis; CDP-diacylglycerol from sn-glycerol 3-phosphate: step 2/3. Converts 1-acyl-sn-glycerol-3-phosphate (lysophosphatidic acid or LPA) into 1,2-diacyl-sn-glycerol-3-phosphate (phosphatidic acid or PA) by incorporating an acyl moiety at the sn-2 position of the glycerol backbone. Exhibits high acyl-CoA specificity for polyunsaturated fatty acyl-CoA, especially docosahexaenoyl-CoA (22:6-CoA, DHA-CoA). This is 1-acyl-sn-glycerol-3-phosphate acyltransferase delta (AGPAT4) from Homo sapiens (Human).